The following is a 405-amino-acid chain: Probable tRNA sulfurtransferase (405 aa).

Residues 60-165 enclose the THUMP domain; the sequence is EPVNDRLKVV…QDGAYISNQL (106 aa). ATP-binding positions include 183–184, 208–209, Arg265, Gly287, and Gln296; these read ML and HF.

It belongs to the ThiI family.

It is found in the cytoplasm. It carries out the reaction [ThiI sulfur-carrier protein]-S-sulfanyl-L-cysteine + a uridine in tRNA + 2 reduced [2Fe-2S]-[ferredoxin] + ATP + H(+) = [ThiI sulfur-carrier protein]-L-cysteine + a 4-thiouridine in tRNA + 2 oxidized [2Fe-2S]-[ferredoxin] + AMP + diphosphate. It catalyses the reaction [ThiS sulfur-carrier protein]-C-terminal Gly-Gly-AMP + S-sulfanyl-L-cysteinyl-[cysteine desulfurase] + AH2 = [ThiS sulfur-carrier protein]-C-terminal-Gly-aminoethanethioate + L-cysteinyl-[cysteine desulfurase] + A + AMP + 2 H(+). It functions in the pathway cofactor biosynthesis; thiamine diphosphate biosynthesis. Functionally, catalyzes the ATP-dependent transfer of a sulfur to tRNA to produce 4-thiouridine in position 8 of tRNAs, which functions as a near-UV photosensor. Also catalyzes the transfer of sulfur to the sulfur carrier protein ThiS, forming ThiS-thiocarboxylate. This is a step in the synthesis of thiazole, in the thiamine biosynthesis pathway. The sulfur is donated as persulfide by IscS. This Lactobacillus delbrueckii subsp. bulgaricus (strain ATCC BAA-365 / Lb-18) protein is Probable tRNA sulfurtransferase.